We begin with the raw amino-acid sequence, 73 residues long: uncharacterized protein (73 aa).

This is an uncharacterized protein from Vaccinia virus (strain Copenhagen) (VACV).